A 212-amino-acid polypeptide reads, in one-letter code: Leucyl/phenylalanyl-tRNA--protein transferase (212 aa).

Belongs to the L/F-transferase family.

Its subcellular location is the cytoplasm. The catalysed reaction is N-terminal L-lysyl-[protein] + L-leucyl-tRNA(Leu) = N-terminal L-leucyl-L-lysyl-[protein] + tRNA(Leu) + H(+). It catalyses the reaction N-terminal L-arginyl-[protein] + L-leucyl-tRNA(Leu) = N-terminal L-leucyl-L-arginyl-[protein] + tRNA(Leu) + H(+). It carries out the reaction L-phenylalanyl-tRNA(Phe) + an N-terminal L-alpha-aminoacyl-[protein] = an N-terminal L-phenylalanyl-L-alpha-aminoacyl-[protein] + tRNA(Phe). Its function is as follows. Functions in the N-end rule pathway of protein degradation where it conjugates Leu, Phe and, less efficiently, Met from aminoacyl-tRNAs to the N-termini of proteins containing an N-terminal arginine or lysine. This is Leucyl/phenylalanyl-tRNA--protein transferase from Paracoccus denitrificans (strain Pd 1222).